A 549-amino-acid polypeptide reads, in one-letter code: Pleckstrin homology domain-containing family A member 8 (549 aa).

Residues 1-93 (MEGVLYKWTN…WLVALGTAKA (93 aa)) enclose the PH domain. Disordered regions lie at residues 180–245 (NPDL…ENIS) and 257–312 (QNDL…QEVQ). The span at 203–219 (KSNDPKNLHPGETRKDL) shows a compositional bias: basic and acidic residues. The segment covering 276–288 (EPVEEQQTDGSTE) has biased composition (acidic residues). A compositionally biased stretch (polar residues) spans 299-309 (EVSMSPTQNKQ).

It is found in the cytoplasm. Its subcellular location is the golgi apparatus. The protein resides in the trans-Golgi network membrane. The protein localises to the membrane. In terms of biological role, cargo transport protein that is required for apical transport from the trans-Golgi network (TGN) to the plasma membrane. In Danio rerio (Zebrafish), this protein is Pleckstrin homology domain-containing family A member 8 (plekha8).